Consider the following 404-residue polypeptide: Imidazolonepropionase (404 aa).

Positions 73 and 75 each coordinate Fe(3+). Residues H73 and H75 each coordinate Zn(2+). Residues R82, Y145, and H178 each coordinate 4-imidazolone-5-propanoate. N-formimidoyl-L-glutamate is bound at residue Y145. Residue H243 coordinates Fe(3+). Position 243 (H243) interacts with Zn(2+). Residue Q246 participates in 4-imidazolone-5-propanoate binding. D318 is a Fe(3+) binding site. Zn(2+) is bound at residue D318. The N-formimidoyl-L-glutamate site is built by N320 and G322. Residue S323 coordinates 4-imidazolone-5-propanoate.

The protein belongs to the metallo-dependent hydrolases superfamily. HutI family. The cofactor is Zn(2+). It depends on Fe(3+) as a cofactor.

The protein localises to the cytoplasm. It carries out the reaction 4-imidazolone-5-propanoate + H2O = N-formimidoyl-L-glutamate. Its pathway is amino-acid degradation; L-histidine degradation into L-glutamate; N-formimidoyl-L-glutamate from L-histidine: step 3/3. Catalyzes the hydrolytic cleavage of the carbon-nitrogen bond in imidazolone-5-propanoate to yield N-formimidoyl-L-glutamate. It is the third step in the universal histidine degradation pathway. The polypeptide is Imidazolonepropionase (Bradyrhizobium sp. (strain BTAi1 / ATCC BAA-1182)).